Here is a 97-residue protein sequence, read N- to C-terminus: MSVEEDATVREPLDLIRLSIEERIYVKLRSDRELRGKLHAFDQHLNMILGDVEEVITTIEIDDETYEEIVRTTKRTVPFLFVRGDGVILVSPPLRTT.

Residue serine 2 is modified to N-acetylserine. In terms of domain architecture, Sm spans 11–96 (EPLDLIRLSI…VILVSPPLRT (86 aa)).

This sequence belongs to the snRNP Sm proteins family. As to quaternary structure, component of the heptameric LSM1-LSM7 complex that forms a seven-membered ring structure with a donut shape. The LSM subunits are arranged in the order LSM1, LSM2, LSM3, LSM6, LSM5, LSM7 and LSM4. Component of the heptameric LSM2-LSM8 complex that forms a seven-membered ring structure with a donut shape. The LSM subunits are arranged in the order LSM8, LSM2, LSM3, LSM6, LSM5, LSM7 and LSM4. LSM3A subunit interacts only with its two neighboring subunits, LSM2 and LSM6A or LSM6B. Expressed in roots, leaves, stems, flowers and siliques.

It is found in the cytoplasm. The protein resides in the nucleus. Component of LSM protein complexes, which are involved in RNA processing. Component of the cytoplasmic LSM1-LSM7 complex which is involved in mRNA degradation by promoting decapping and leading to accurate 5'-3' mRNA decay. The cytoplasmic LSM1-LSM7 complex regulates developmental gene expression by the decapping of specific development-related transcripts. Component of the nuclear LSM2-LSM8 complex which is involved splicing nuclear mRNAs. LSM2-LSM8 binds directly to the U6 small nuclear RNAs (snRNAs) and is essential for accurate splicing of selected development-related mRNAs through the stabilization of the spliceosomal U6 snRNA. Plays a critical role in the regulation of development-related gene expression. This is Sm-like protein LSM3A from Arabidopsis thaliana (Mouse-ear cress).